Reading from the N-terminus, the 62-residue chain is ACQLITAEDSRGTQLHRALRSTSKVSKSTSCVEAGSYCRPNVKLCCGFCSPYSKICMNFPKN.

Positions 1 to 7 (ACQLITA) are cleaved as a signal peptide. Residues 8 to 27 (EDSRGTQLHRALRSTSKVSK) constitute a propeptide that is removed on maturation. 3 disulfide bridges follow: C31-C46, C38-C49, and C45-C56.

Belongs to the conotoxin O1 superfamily. In terms of tissue distribution, expressed by the venom duct.

Its subcellular location is the secreted. In terms of biological role, omega-conotoxins act at presynaptic membranes, they bind and block voltage-gated calcium channels (Cav). In Conus bullatus (Bubble cone), this protein is Omega-conotoxin-like Bu11.